Consider the following 244-residue polypeptide: 2,5-diamino-6-ribosylamino-4(3H)-pyrimidinone 5'-phosphate reductase (244 aa).

NADP(+) contacts are provided by residues Thr-74, Asp-78, Ile-160, and 183-187 (GSHVI).

The protein belongs to the HTP reductase family. As to quaternary structure, homodimer.

The enzyme catalyses 2,5-diamino-6-(1-D-ribitylamino)pyrimidin-4(3H)-one 5'-phosphate + NADP(+) = 2,5-diamino-6-(1-D-ribosylamino)pyrimidin-4(3H)-one 5'-phosphate + NADPH + H(+). The catalysed reaction is 2,5-diamino-6-(1-D-ribitylamino)pyrimidin-4(3H)-one 5'-phosphate + NAD(+) = 2,5-diamino-6-(1-D-ribosylamino)pyrimidin-4(3H)-one 5'-phosphate + NADH + H(+). It participates in cofactor biosynthesis; riboflavin biosynthesis. Its function is as follows. Catalyzes an early step in riboflavin biosynthesis, the NADPH-dependent reduction of the ribose side chain of 2,5-diamino-6-ribosylamino-4(3H)-pyrimidinone 5'-phosphate, yielding 2,5-diamino-6-ribitylamino-4(3H)-pyrimidinone 5'-phosphate. In Candida glabrata (strain ATCC 2001 / BCRC 20586 / JCM 3761 / NBRC 0622 / NRRL Y-65 / CBS 138) (Yeast), this protein is 2,5-diamino-6-ribosylamino-4(3H)-pyrimidinone 5'-phosphate reductase (RIB7).